Here is a 209-residue protein sequence, read N- to C-terminus: Large ribosomal subunit protein uL3 (209 aa).

Gln150 carries the N5-methylglutamine modification.

It belongs to the universal ribosomal protein uL3 family. In terms of assembly, part of the 50S ribosomal subunit. Forms a cluster with proteins L14 and L19. In terms of processing, methylated by PrmB.

One of the primary rRNA binding proteins, it binds directly near the 3'-end of the 23S rRNA, where it nucleates assembly of the 50S subunit. The chain is Large ribosomal subunit protein uL3 from Vibrio cholerae serotype O1 (strain ATCC 39541 / Classical Ogawa 395 / O395).